We begin with the raw amino-acid sequence, 879 residues long: Metabotropic glutamate receptor 3 (879 aa).

A signal peptide spans 1–22; it reads MKMLTRLQVLTLALFSKGFLLS. Topologically, residues 23–576 are extracellular; it reads LGDHNFLRRE…EDYIRWEDAW (554 aa). Residues Cys-57 and Cys-99 are joined by a disulfide bond. Residues Ser-151 and 172–174 each bind L-glutamate; that span reads AST. Asn-209 is a glycosylation site (N-linked (GlcNAc...) asparagine). Tyr-222 contributes to the L-glutamate binding site. Intrachain disulfides connect Cys-240/Cys-527, Cys-361/Cys-373, Cys-412/Cys-419, Cys-509/Cys-528, Cys-513/Cys-531, Cys-534/Cys-546, and Cys-549/Cys-562. Asn-292 carries an N-linked (GlcNAc...) asparagine glycan. L-glutamate is bound at residue Asp-301. Lys-389 provides a ligand contact to L-glutamate. N-linked (GlcNAc...) asparagine glycosylation is found at Asn-414 and Asn-439. A helical membrane pass occupies residues 577 to 599; the sequence is AIGPVTIACLGFMCTCMVVTVFI. Residues 600-613 lie on the Cytoplasmic side of the membrane; sequence KHNNTPLVKASGRE. Residues 614–634 traverse the membrane as a helical segment; it reads LCYILLFGVGLSYCMTFFFIA. Over 635–645 the chain is Extracellular; sequence KPSPVICALRR. The helical transmembrane segment at 646-664 threads the bilayer; that stretch reads LGLGSSFAICYSALLTKTN. At 665–688 the chain is on the cytoplasmic side; that stretch reads CIARIFDGVKNGAQRPKFISPSSQ. The helical transmembrane segment at 689–709 threads the bilayer; that stretch reads VFICLGLILVQIVMVSVWLIL. Over 710 to 734 the chain is Extracellular; it reads EAPGTRRYTLAEKRETVILKCNVKD. The helical transmembrane segment at 735 to 756 threads the bilayer; it reads SSMLISLTYDVILVILCTVYAF. Topologically, residues 757-769 are cytoplasmic; the sequence is KTRKCPENFNEAK. A helical transmembrane segment spans residues 770–792; sequence FIGFTMYTTCIIWLAFLPIFYVT. Over 793 to 802 the chain is Extracellular; that stretch reads SSDYRVQTTT. Residues 803-828 form a helical membrane-spanning segment; sequence MCISVSLSGFVVLGCLFAPKVHIILF. The Cytoplasmic portion of the chain corresponds to 829–879; sequence QPQKNVVTHRLHLNRFSVSGTGTTYSQSSASTYVPTVCNGREVLDSTTSSL.

This sequence belongs to the G-protein coupled receptor 3 family. Interacts with TAMALIN. In terms of tissue distribution, detected in brain cortex, thalamus, subthalamic nucleus, substantia nigra, hypothalamus, hippocampus, corpus callosum, caudate nucleus and amygdala.

Its subcellular location is the cell membrane. In terms of biological role, G-protein coupled receptor for glutamate. Ligand binding causes a conformation change that triggers signaling via guanine nucleotide-binding proteins (G proteins) and modulates the activity of down-stream effectors. Signaling inhibits adenylate cyclase activity. This is Metabotropic glutamate receptor 3 (GRM3) from Homo sapiens (Human).